Reading from the N-terminus, the 241-residue chain is MADYQYHDVSKMIDHSLLPPTLTEADLDSGIDLAIAYEVASVCILPYYLKRCAAKLAGTGVKASTTIGFPHGGHTTAIKKAEAEQAIQDGCEELDFVVNISQVLSGGWDYVQNEIGEVTELTHAAGQKIKVIFENCYLQDEHKIRLCEICTELKVDWVKTSTGYGTGGATMDDLRLMRQHSGENVQVKAAGGVRDLATLLEVRALGASRCGASRTAEMLGEARKQLGMPAIEITATGSSGY.

The active-site Proton donor/acceptor is Asp-95. The active-site Schiff-base intermediate with acetaldehyde is Lys-159. The active-site Proton donor/acceptor is Lys-188.

Belongs to the DeoC/FbaB aldolase family. DeoC type 1 subfamily.

Its subcellular location is the cytoplasm. The catalysed reaction is 2-deoxy-D-ribose 5-phosphate = D-glyceraldehyde 3-phosphate + acetaldehyde. Its pathway is carbohydrate degradation; 2-deoxy-D-ribose 1-phosphate degradation; D-glyceraldehyde 3-phosphate and acetaldehyde from 2-deoxy-alpha-D-ribose 1-phosphate: step 2/2. Its function is as follows. Catalyzes a reversible aldol reaction between acetaldehyde and D-glyceraldehyde 3-phosphate to generate 2-deoxy-D-ribose 5-phosphate. The polypeptide is Deoxyribose-phosphate aldolase (Rhodopirellula baltica (strain DSM 10527 / NCIMB 13988 / SH1)).